The following is a 143-amino-acid chain: Ribosomal RNA large subunit methyltransferase H (143 aa).

Leucine 68 and glycine 95 together coordinate S-adenosyl-L-methionine.

It belongs to the RNA methyltransferase RlmH family. Homodimer.

The protein localises to the cytoplasm. The catalysed reaction is pseudouridine(1915) in 23S rRNA + S-adenosyl-L-methionine = N(3)-methylpseudouridine(1915) in 23S rRNA + S-adenosyl-L-homocysteine + H(+). Specifically methylates the pseudouridine at position 1915 (m3Psi1915) in 23S rRNA. This chain is Ribosomal RNA large subunit methyltransferase H, found in Mycoplasma mobile (strain ATCC 43663 / 163K / NCTC 11711) (Mesomycoplasma mobile).